The sequence spans 29 residues: Kalata-B4 (29 aa).

Residues 1–29 constitute a cross-link (cyclopeptide (Gly-Asp)); it reads GLPVCGETCVGGTCNTPGCTCSWPVCTRD. 3 cysteine pairs are disulfide-bonded: Cys5–Cys19, Cys9–Cys21, and Cys14–Cys26.

Post-translationally, this is a cyclic peptide.

Functionally, probably participates in a plant defense mechanism. This is Kalata-B4 from Oldenlandia affinis.